A 91-amino-acid polypeptide reads, in one-letter code: UPF0223 protein SACOL1106 (91 aa).

It belongs to the UPF0223 family.

The chain is UPF0223 protein SACOL1106 from Staphylococcus aureus (strain COL).